A 76-amino-acid polypeptide reads, in one-letter code: Acyl carrier protein (76 aa).

The 76-residue stretch at 1–76 folds into the Carrier domain; that stretch reads MSVEEKISKI…DAIAYIKNKQ (76 aa). Position 36 is an O-(pantetheine 4'-phosphoryl)serine (S36).

The protein belongs to the acyl carrier protein (ACP) family. In terms of processing, 4'-phosphopantetheine is transferred from CoA to a specific serine of apo-ACP by AcpS. This modification is essential for activity because fatty acids are bound in thioester linkage to the sulfhydryl of the prosthetic group.

It localises to the cytoplasm. The protein operates within lipid metabolism; fatty acid biosynthesis. In terms of biological role, carrier of the growing fatty acid chain in fatty acid biosynthesis. This is Acyl carrier protein from Nitratidesulfovibrio vulgaris (strain DSM 19637 / Miyazaki F) (Desulfovibrio vulgaris).